Reading from the N-terminus, the 211-residue chain is PDR1 up-regulated protein 1 (211 aa).

Transmembrane regions (helical) follow at residues 45–67 (ISKASVVGAATGLSAGLGGPYAY) and 82–99 (RTILLGVVSMVIMRNVAA).

The protein belongs to the PUP1 family.

The protein resides in the mitochondrion membrane. Functionally, mitochondrial protein that contributes to the enhanced virulence of C.glabrata strains that acquired azole resistance. In Candida glabrata (strain ATCC 2001 / BCRC 20586 / JCM 3761 / NBRC 0622 / NRRL Y-65 / CBS 138) (Yeast), this protein is PDR1 up-regulated protein 1.